The chain runs to 302 residues: 4-diphosphocytidyl-2-C-methyl-D-erythritol kinase (302 aa).

Lysine 27 is an active-site residue. 110 to 120 (PMGGGVGGGSS) lines the ATP pocket. Residue aspartate 152 is part of the active site.

This sequence belongs to the GHMP kinase family. IspE subfamily.

It catalyses the reaction 4-CDP-2-C-methyl-D-erythritol + ATP = 4-CDP-2-C-methyl-D-erythritol 2-phosphate + ADP + H(+). It participates in isoprenoid biosynthesis; isopentenyl diphosphate biosynthesis via DXP pathway; isopentenyl diphosphate from 1-deoxy-D-xylulose 5-phosphate: step 3/6. Its function is as follows. Catalyzes the phosphorylation of the position 2 hydroxy group of 4-diphosphocytidyl-2C-methyl-D-erythritol. The chain is 4-diphosphocytidyl-2-C-methyl-D-erythritol kinase from Mannheimia succiniciproducens (strain KCTC 0769BP / MBEL55E).